We begin with the raw amino-acid sequence, 421 residues long: Phosphoglycerate kinase, cytosolic (421 aa).

Residues Val-23, Asp-24, Phe-25, Asn-26, Arg-39, Ser-61, His-62, Gly-64, Arg-65, Arg-135, His-172, and Arg-173 each contribute to the (2R)-3-phosphoglycerate site. Residues Gly-218 and Ala-219 each coordinate ADP. Gly-218 is a binding site for CDP. 2 residues coordinate AMP: Ala-219 and Lys-220. Ala-219 contributes to the ATP binding site. Mg(2+) is bound at residue Ala-219. Residue Lys-220 coordinates (2R)-3-phosphoglycerate. Asp-223 serves as a coordination point for CDP. Mg(2+) is bound at residue Asp-223. Residues Lys-224 and Gly-242 each coordinate ADP. Lys-224 serves as a coordination point for AMP. Residue Lys-224 participates in ATP binding. Residue Gly-242 coordinates CDP. Residues Ala-243 and Ala-315 each contribute to the AMP site. 2 residues coordinate ATP: Ala-243 and Ala-315. 2 residues coordinate ADP: Ala-315 and Asn-339. CDP contacts are provided by Gly-340 and Phe-345. Residues Phe-345, Glu-346, Asp-378, and Ser-379 each coordinate ADP. Glu-346 is a binding site for AMP. Residues Glu-346, Asp-378, and Ser-379 each coordinate ATP. Asp-378 contributes to the Mg(2+) binding site.

The protein belongs to the phosphoglycerate kinase family. In terms of assembly, monomer. The cofactor is Mg(2+).

It localises to the cytoplasm. The catalysed reaction is (2R)-3-phosphoglycerate + ATP = (2R)-3-phospho-glyceroyl phosphate + ADP. It functions in the pathway carbohydrate degradation; glycolysis; pyruvate from D-glyceraldehyde 3-phosphate: step 2/5. This Trypanosoma brucei brucei protein is Phosphoglycerate kinase, cytosolic.